The following is a 240-amino-acid chain: 1-(5-phosphoribosyl)-5-[(5-phosphoribosylamino)methylideneamino] imidazole-4-carboxamide isomerase 1 (240 aa).

Asp8 (proton acceptor) is an active-site residue. Asp129 acts as the Proton donor in catalysis.

It belongs to the HisA/HisF family.

It localises to the cytoplasm. It catalyses the reaction 1-(5-phospho-beta-D-ribosyl)-5-[(5-phospho-beta-D-ribosylamino)methylideneamino]imidazole-4-carboxamide = 5-[(5-phospho-1-deoxy-D-ribulos-1-ylimino)methylamino]-1-(5-phospho-beta-D-ribosyl)imidazole-4-carboxamide. The protein operates within amino-acid biosynthesis; L-histidine biosynthesis; L-histidine from 5-phospho-alpha-D-ribose 1-diphosphate: step 4/9. In Ruegeria pomeroyi (strain ATCC 700808 / DSM 15171 / DSS-3) (Silicibacter pomeroyi), this protein is 1-(5-phosphoribosyl)-5-[(5-phosphoribosylamino)methylideneamino] imidazole-4-carboxamide isomerase 1.